Here is a 570-residue protein sequence, read N- to C-terminus: Pre-mRNA 3'-end-processing factor FIP1 (570 aa).

Basic and acidic residues predominate over residues 1–10; the sequence is MSAEEADKTT. Residues 1 to 107 form a disordered region; the sequence is MSAEEADKTT…SDDDDDDVRV (107 aa). Acidic residues predominate over residues 16–38; that stretch reads AGDEEEEWLYGDEGESKETEEEE. Positions 56-77 are enriched in low complexity; it reads DAPTTTNNSSDSATPPTTTTTT. Over residues 87–104 the composition is skewed to acidic residues; that stretch reads APGEDEDSESDSDDDDDD. Position 125 is a phosphothreonine (T125). Position 247 is a phosphoserine (S247). Disordered stretches follow at residues 300–328, 371–400, and 418–570; these read RRRHNLEGNNIQVISEHSSSEVEPEVQKM, PNFPPPTGGPPPSLIPTLDNSGHPGGYDGR, and GAVN…EAME. The segment covering 371–384 has biased composition (pro residues); it reads PNFPPPTGGPPPSL. Composition is skewed to basic and acidic residues over residues 436 to 462 and 476 to 506; these read YPRRDKEREKERERERQRDRGHERDHS and DEERYRSYRDYGDRGYERHRERASREKEERH. 2 stretches are compositionally biased toward basic residues: residues 520-529 and 538-548; these read KSSRSSSRRR and HRRHKHKKSKR. Positions 549-562 are enriched in basic and acidic residues; it reads SKEGKEPSEERSAD.

It belongs to the FIP1 family.

The protein localises to the nucleus. Its function is as follows. Involved in mRNA processing. The protein is Pre-mRNA 3'-end-processing factor FIP1 (fip1l1) of Danio rerio (Zebrafish).